We begin with the raw amino-acid sequence, 60 residues long: Large ribosomal subunit protein uL30 (60 aa).

This sequence belongs to the universal ribosomal protein uL30 family. As to quaternary structure, part of the 50S ribosomal subunit.

In Histophilus somni (strain 2336) (Haemophilus somnus), this protein is Large ribosomal subunit protein uL30.